Here is a 732-residue protein sequence, read N- to C-terminus: DNA-directed RNA polymerase subunit beta' (732 aa).

Cys70, Cys72, Cys85, and Cys88 together coordinate Zn(2+). Mg(2+) is bound by residues Asp575, Asp577, and Asp579.

Belongs to the RNA polymerase beta' chain family. RpoC1 subfamily. As to quaternary structure, in plastids the minimal PEP RNA polymerase catalytic core is composed of four subunits: alpha, beta, beta', and beta''. When a (nuclear-encoded) sigma factor is associated with the core the holoenzyme is formed, which can initiate transcription. Mg(2+) is required as a cofactor. The cofactor is Zn(2+).

It localises to the plastid. The protein resides in the chloroplast. It catalyses the reaction RNA(n) + a ribonucleoside 5'-triphosphate = RNA(n+1) + diphosphate. In terms of biological role, DNA-dependent RNA polymerase catalyzes the transcription of DNA into RNA using the four ribonucleoside triphosphates as substrates. The sequence is that of DNA-directed RNA polymerase subunit beta' from Thalassiosira pseudonana (Marine diatom).